The chain runs to 401 residues: tRNA(Met) cytidine acetate ligase (401 aa).

ATP contacts are provided by residues 7 to 20 (IVEY…HLYH), G102, N164, and R189.

The protein belongs to the TmcAL family.

The protein resides in the cytoplasm. It catalyses the reaction cytidine(34) in elongator tRNA(Met) + acetate + ATP = N(4)-acetylcytidine(34) in elongator tRNA(Met) + AMP + diphosphate. Catalyzes the formation of N(4)-acetylcytidine (ac(4)C) at the wobble position of elongator tRNA(Met), using acetate and ATP as substrates. First activates an acetate ion to form acetyladenylate (Ac-AMP) and then transfers the acetyl group to tRNA to form ac(4)C34. This is tRNA(Met) cytidine acetate ligase from Thermoanaerobacter sp. (strain X514).